The following is a 2313-amino-acid chain: Serine/threonine-protein kinase smg-1 (2313 aa).

Positions 779–791 are enriched in basic and acidic residues; it reads NRKSSDKKPKSTT. The segment at 779 to 798 is disordered; sequence NRKSSDKKPKSTTEDVPPPA. The region spanning 1045–1528 is the FAT domain; that stretch reads ARERLQLVES…VFQVVSGAAS (484 aa). The stretch at 1478-1514 is one HEAT repeat; the sequence is VHVWKEILPQLFARLSHPSDHIRKTLVDLISRVCTAA. A PI3K/PI4K catalytic domain is found at 1746-2091; sequence VADNVTILPT…DTIELFQLRV (346 aa). Positions 1752 to 1758 are G-loop; it reads ILPTKTR. A catalytic loop region spans residues 1954 to 1962; that stretch reads GLGDRHLDN. An activation loop region spans residues 1974 to 1998; the sequence is HIDYNICFDKGKILRIPETVPFRLS. The 33-residue stretch at 2281-2313 folds into the FATC domain; that stretch reads RKLSPREEADVLIAEATSSANLAQMYEGWTAWV.

The protein belongs to the PI3/PI4-kinase family. In terms of assembly, component of a post-splicing multiprotein NMD complex. Mn(2+) is required as a cofactor.

Its subcellular location is the cytoplasm. The enzyme catalyses L-seryl-[protein] + ATP = O-phospho-L-seryl-[protein] + ADP + H(+). The catalysed reaction is L-threonyl-[protein] + ATP = O-phospho-L-threonyl-[protein] + ADP + H(+). Serine/threonine protein kinase involved in mRNA surveillance. Recognizes the substrate consensus sequence [ST]-Q. Involved in nonsense-mediated decay (NMD) of mRNAs containing premature stop codons by phosphorylating smg-2. This Caenorhabditis briggsae protein is Serine/threonine-protein kinase smg-1 (smg-1).